A 121-amino-acid polypeptide reads, in one-letter code: Large ribosomal subunit protein uL14c (121 aa).

The protein belongs to the universal ribosomal protein uL14 family. As to quaternary structure, part of the 50S ribosomal subunit.

The protein resides in the plastid. The protein localises to the chloroplast. In terms of biological role, binds to 23S rRNA. The polypeptide is Large ribosomal subunit protein uL14c (Emiliania huxleyi (Coccolithophore)).